Consider the following 499-residue polypeptide: MFITSKEMRRIELNSRWLGFEEDFMMENAGAGVARVVIGEYSPNDVLVVCGTGGNGGDGFVTARHLDSEGVDVDVLLVGRREAIKNEAAELNLRRLDRAGIPVQEVRDSEDLESVDFERDVVVDALLGFGIRGRLREPVRSAVLRINEASRAGTRVVSIDIPTGLDPDSGETPDVAVEADLVVSIHRHKRGVRKLRDVFLRRVNAGIPEIAERICGPGDLITSDIWRRDPWSHKGQHGRVLIIGGSRKYVGAPQLAARGALRAGVDLVFLLTVDAVPKNDPNVIYRAVPAERLEPEHLDEVDLEGVDTVVVGPGLGADADSVGILRELAESFDGMIIVDADGLRGISGVNVDDRFVLTPHAGEFRREFGEELGRSLEDRSEAVRRVSEELGCTILLKGRVDVIGSPDGEIRWNVTGTPAMTVGGTGDVLAGVVAGVAARCREGFEAACIGAFVVGSAGCLAERRLSQGLTAEDVAEYVPKVLRNPWAAEPEAVTEVRRD.

Positions 1 to 217 (MFITSKEMRR…PEIAERICGP (217 aa)) are NAD(P)H-hydrate epimerase. Positions 8–213 (MRRIELNSRW…NAGIPEIAER (206 aa)) constitute a YjeF N-terminal domain. The interval 54–58 (GNGGD) is NADPHX 1; for epimerase activity. 2 residues coordinate K(+): N55 and D124. Residues 128–134 (GFGIRGR) are NADPHX 1; for epimerase activity. D160 lines the (6S)-NADPHX pocket. T163 serves as a coordination point for K(+). The region spanning 217 to 485 (PGDLITSDIW…EYVPKVLRNP (269 aa)) is the YjeF C-terminal domain. Residues 217 to 499 (PGDLITSDIW…PEAVTEVRRD (283 aa)) form an ADP-dependent (S)-NAD(P)H-hydrate dehydratase region. G314 serves as a coordination point for (6S)-NADPHX. The interval 360–366 (HAGEFRR) is NADPHX 2; for dehydratase activity. ADP-binding positions include 397–401 (KGRVD) and 417–426 (TPAMTVGGTG). Residue D427 coordinates (6S)-NADPHX.

It in the N-terminal section; belongs to the NnrE/AIBP family. In the C-terminal section; belongs to the NnrD/CARKD family. Requires K(+) as cofactor.

The enzyme catalyses (6S)-NADHX + ADP = AMP + phosphate + NADH + H(+). The catalysed reaction is (6S)-NADPHX + ADP = AMP + phosphate + NADPH + H(+). It carries out the reaction (6R)-NADHX = (6S)-NADHX. It catalyses the reaction (6R)-NADPHX = (6S)-NADPHX. Functionally, bifunctional enzyme that catalyzes the epimerization of the S- and R-forms of NAD(P)HX and the dehydration of the S-form of NAD(P)HX at the expense of ADP, which is converted to AMP. This allows the repair of both epimers of NAD(P)HX, a damaged form of NAD(P)H that is a result of enzymatic or heat-dependent hydration. This is Bifunctional NAD(P)H-hydrate repair enzyme Nnr (nnr) from Methanopyrus kandleri (strain AV19 / DSM 6324 / JCM 9639 / NBRC 100938).